The following is a 5628-amino-acid chain: Polyketide synthase ThaG (5628 aa).

Residues 13–448 (HDDIAVIGIA…GTNAHVVLRE (436 aa)) enclose the Ketosynthase family 3 (KS3) 1 domain. Active-site for beta-ketoacyl synthase 1 activity residues include C184, H319, and H361. Disordered stretches follow at residues 552-613 (GNLV…DGPT) and 1156-1183 (ASPG…RAEA). The segment covering 559 to 589 (GPHDEQADHDGSGEHGEHGERARAGADDLSR) has biased composition (basic and acidic residues). Residues 1156 to 1173 (ASPGAASSGAAAPNAASD) show a composition bias toward low complexity. A compositionally biased stretch (basic and acidic residues) spans 1174-1183 (ASRDTERAEA). Residues 1209-1286 (AHGSARLPAL…RLAGHLATRL (78 aa)) form the Carrier 1 domain. An O-(pantetheine 4'-phosphoryl)serine modification is found at S1246. Residues 1373–1781 (YEPIAIVGMS…GTNAHVIVEA (409 aa)) form the Ketosynthase family 3 (KS3) 2 domain. Active-site for beta-ketoacyl synthase 2 activity residues include C1529, H1664, and H1704. The interval 1967–2099 (AREPGARERA…GVVDELNEPA (133 aa)) is N-terminal hotdog fold 1. In terms of domain architecture, PKS/mFAS DH 1 spans 1967 to 2261 (AREPGARERA…SARWRKLAGA (295 aa)). H1999 acts as the Proton acceptor; for dehydratase activity 1 in catalysis. The tract at residues 2113–2261 (AGERVDGAAL…SARWRKLAGA (149 aa)) is C-terminal hotdog fold 1. The active-site Proton donor; for dehydratase activity 1 is the D2175. The interval 2426 to 2446 (DADEDDRDGREPAGGPPLRDD) is disordered. The Carrier 2 domain maps to 2702–2780 (PAARVDLHAL…AIARALDASA (79 aa)). Residues 2817–2836 (TPPDAGAPQRGAHAAAAEGS) are disordered. The segment covering 2822–2835 (GAPQRGAHAAAAEG) has biased composition (low complexity). One can recognise a Carrier 3 domain in the interval 2862–2935 (ARVGARLSAL…ELTDYFVRRH (74 aa)). The residue at position 2896 (S2896) is an O-(pantetheine 4'-phosphoryl)serine. The region spanning 3005 to 3430 (ADAIAVIGLA…GANAHVIVRE (426 aa)) is the Ketosynthase family 3 (KS3) 3 domain. Active-site for beta-ketoacyl synthase 3 activity residues include C3175, H3310, and H3351. The disordered stretch occupies residues 3526 to 3546 (PGKKQLRGNGRARRGDAPPAG). An N-terminal hotdog fold 2 region spans residues 3621 to 3743 (HPMLDANRSE…GRSPSRAARG (123 aa)). In terms of domain architecture, PKS/mFAS DH 2 spans 3621 to 3895 (HPMLDANRSE…SRAAASWRTA (275 aa)). The active-site Proton acceptor; for dehydratase activity 2 is H3650. The interval 3758 to 3895 (RAAPAFDADA…SRAAASWRTA (138 aa)) is C-terminal hotdog fold 2. D3818 serves as the catalytic Proton donor; for dehydratase activity 2. A disordered region spans residues 3917–3942 (PAAESPSAATSTSAATSPAISTSAAT). Residues 4840 to 4914 (TRTAALLRSL…ALAAYVGSQL (75 aa)) enclose the Carrier 4 domain. S4874 carries the O-(pantetheine 4'-phosphoryl)serine modification. Positions 4960–4992 (APRARTGADAPDTSLASSASSISSARASSPASP) are disordered. The 427-residue stretch at 4998-5424 (SFDVAIVGAS…GVNAHVVLEE (427 aa)) folds into the Ketosynthase family 3 (KS3) 4 domain. Active-site for beta-ketoacyl synthase 4 activity residues include C5158, H5293, and H5339. One can recognise a Carrier 5 domain in the interval 5470–5544 (ARIEAVIRDA…ALRDHVAERI (75 aa)). S5504 bears the O-(pantetheine 4'-phosphoryl)serine mark. A disordered region spans residues 5573-5603 (VSEATEASDASEASDASEASEASEASEASKA).

The cofactor is pantetheine 4'-phosphate.

The protein resides in the cytoplasm. Its pathway is antibiotic biosynthesis. Involved in production of the polyketide antibiotic thailandamide. The sequence is that of Polyketide synthase ThaG from Burkholderia thailandensis (strain ATCC 700388 / DSM 13276 / CCUG 48851 / CIP 106301 / E264).